We begin with the raw amino-acid sequence, 782 residues long: Calcium-independent phospholipase A2-gamma (782 aa).

N-linked (GlcNAc...) asparagine glycosylation occurs at Asn4. Disordered stretches follow at residues 219–275 (EKMS…PSAI) and 317–343 (SKSQ…AEEK). The segment covering 220 to 248 (KMSQQKENEHFRDKSELEDKKVEEGKLRS) has biased composition (basic and acidic residues). The N-linked (GlcNAc...) asparagine glycan is linked to Asn361. The region spanning 445–640 (LSIDGGGTRG…LLNNPSALAM (196 aa)) is the PNPLA domain. The short motif at 449–454 (GGGTRG) is the GXGXXG element. A helical transmembrane segment spans residues 475–495 (LFDYICGVSTGAILAFMLGLF). Positions 481–485 (GVSTG) match the GXSXG motif. Ser483 functions as the Nucleophile in the catalytic mechanism. Asp627 (proton acceptor) is an active-site residue. Positions 627 to 629 (DGG) match the DGA/G motif. An N6-succinyllysine modification is found at Lys736.

In terms of tissue distribution, expressed in parenchymal tissues including heart, skeletal muscle, placenta, brain, liver and pancreas. Also expressed in bronchial epithelial cells and kidney. Highest expression is observed in skeletal muscle and heart.

The protein resides in the endoplasmic reticulum membrane. It localises to the mitochondrion membrane. Its subcellular location is the peroxisome membrane. The enzyme catalyses a 1,2-diacyl-sn-glycero-3-phosphocholine + H2O = a 1-acyl-sn-glycero-3-phosphocholine + a fatty acid + H(+). The catalysed reaction is a 1,2-diacyl-sn-glycero-3-phosphocholine + H2O = a 2-acyl-sn-glycero-3-phosphocholine + a fatty acid + H(+). It catalyses the reaction a 1,2-diacyl-sn-glycero-3-phosphoethanolamine + H2O = a 1-acyl-sn-glycero-3-phosphoethanolamine + a fatty acid + H(+). It carries out the reaction a 1-O-(1Z-alkenyl)-2-acyl-sn-glycero-3-phosphocholine + H2O = a 1-O-(1Z-alkenyl)-sn-glycero-3-phosphocholine + a fatty acid + H(+). The enzyme catalyses a 1-acyl-sn-glycero-3-phosphocholine + H2O = sn-glycerol 3-phosphocholine + a fatty acid + H(+). The catalysed reaction is 1-acyl-2-(9Z,12Z)-octadecadienoyl-sn-glycero-3-phosphocholine + H2O = a 1-acyl-sn-glycero-3-phosphocholine + (9Z,12Z)-octadecadienoate + H(+). It catalyses the reaction 1-acyl-2-(5Z,8Z,11Z,14Z-eicosatetraenoyl)-sn-glycero-3-phosphocholine + H2O = a 1-acyl-sn-glycero-3-phosphocholine + (5Z,8Z,11Z,14Z)-eicosatetraenoate + H(+). It carries out the reaction 1-hexadecanoyl-2-(5Z,8Z,11Z,14Z-eicosatetraenoyl)-sn-glycero-3-phosphocholine + H2O = 1-hexadecanoyl-sn-glycero-3-phosphocholine + (5Z,8Z,11Z,14Z)-eicosatetraenoate + H(+). The enzyme catalyses 1-octadecanoyl-2-(9Z-octadecenoyl)-sn-glycero-3-phosphocholine + H2O = 1-octadecanoyl-sn-glycero-3-phosphocholine + (9Z)-octadecenoate + H(+). The catalysed reaction is 1-hexadecanoyl-2-(9Z-octadecenoyl)-sn-glycero-3-phosphocholine + H2O = 1-hexadecanoyl-sn-glycero-3-phosphocholine + (9Z)-octadecenoate + H(+). It catalyses the reaction 1-hexadecanoyl-2-(9Z,12Z-octadecadienoyl)-sn-glycero-3-phosphocholine + H2O = (9Z,12Z)-octadecadienoate + 1-hexadecanoyl-sn-glycero-3-phosphocholine + H(+). It carries out the reaction 1-acyl-2-(9Z,12Z)-octadecadienoyl-sn-glycero-3-phosphoethanolamine + H2O = a 1-acyl-sn-glycero-3-phosphoethanolamine + (9Z,12Z)-octadecadienoate + H(+). The enzyme catalyses 1-acyl-2-(5Z,8Z,11Z,14Z)-eicosatetraenoyl-sn-glycero-3-phosphoethanolamine + H2O = a 1-acyl-sn-glycero-3-phosphoethanolamine + (5Z,8Z,11Z,14Z)-eicosatetraenoate + H(+). The catalysed reaction is 1-hexadecanoyl-2-(5Z,8Z,11Z,14Z-eicosatetraenoyl)-sn-glycero-3-phosphoethanolamine + H2O = 1-hexadecanoyl-sn-glycero-3-phosphoethanolamine + (5Z,8Z,11Z,14Z)-eicosatetraenoate + H(+). It catalyses the reaction 1-hexadecanoyl-2-(5Z,8Z,11Z,14Z-eicosatetraenoyl)-sn-glycero-3-phosphocholine + H2O = 2-(5Z,8Z,11Z,14Z)-eicosatetraenoyl-sn-glycero-3-phosphocholine + hexadecanoate + H(+). It carries out the reaction 1-octadecanoyl-2-(9Z-octadecenoyl)-sn-glycero-3-phosphocholine + H2O = 2-(9Z-octadecenoyl)-sn-glycero-3-phosphocholine + octadecanoate + H(+). The enzyme catalyses 1-hexadecanoyl-2-(4Z,7Z,10Z,13Z,16Z,19Z-docosahexaenoyl)-sn-glycero-3-phosphocholine + H2O = 2-(4Z,7Z,10Z,13Z,16Z,19Z-docosahexaenoyl)-sn-glycero-3-phosphocholine + hexadecanoate + H(+). The catalysed reaction is 1-O-(1Z)-hexadecenyl-2 (5Z,8Z,11Z,14Z)-eicosatetraenoyl-sn-glycero-3-phosphocholine + H2O = 1-(1Z-hexadecenyl)-sn-glycero-3-phosphocholine + (5Z,8Z,11Z,14Z)-eicosatetraenoate + H(+). It catalyses the reaction 1-O-(1Z-hexadecenyl)-2-(9Z-octadecenoyl)-sn-glycero-3-phosphocholine + H2O = 1-(1Z-hexadecenyl)-sn-glycero-3-phosphocholine + (9Z)-octadecenoate + H(+). It carries out the reaction 1-hexadecanoyl-sn-glycero-3-phosphocholine + H2O = sn-glycerol 3-phosphocholine + hexadecanoate + H(+). The enzyme catalyses 1',3'-bis-[1,2-di-(9Z,12Z-octadecadienoyl)-sn-glycero-3-phospho]-glycerol + H2O = 1'-[1,2-di-(9Z,12Z-octadecadienoyl)-sn-glycero-3-phospho]-3'-[1-(9Z,12Z-octadecadienoyl)-sn-glycero-3-phospho]-glycerol + (9Z,12Z)-octadecadienoate + H(+). The catalysed reaction is 1'-[1-acyl-2-(9-hydroxy-(10E,12Z)-octadecadienoyl)-sn-glycero-3-phospho]-3'-[1,2-diacyl-sn-glycero-3-phospho]-glycerol + H2O = 9-hydroxy-(10E,12Z)-octadecadienoate + 1'-[1,2-diacyl-sn-glycero-3-phospho],3'-[1-acyl-sn-glycero-3-phospho]-glycerol + H(+). It functions in the pathway phospholipid metabolism. Its activity is regulated as follows. Calcium-independent phospholipase. Inhibited by (E)-6-bromomethylene-3-1-naphthalenyl-2H-tetrahydropyran-2-one (BEL). The activity toward 1-hexadecanoyl-2-(5Z,8Z,11Z,14Z-eicosatetraenoyl)-sn-glycero-3-phosphocholine is stimulated by cardiolipin. Functionally, calcium-independent and membrane-bound phospholipase, that catalyzes the esterolytic cleavage of fatty acids from glycerophospholipids to yield free fatty acids and lysophospholipids, hence regulating membrane physical properties and the release of lipid second messengers and growth factors. Hydrolyzes phosphatidylethanolamine, phosphatidylcholine and probably phosphatidylinositol with a possible preference for the former. Also has a broad substrate specificity in terms of fatty acid moieties, hydrolyzing saturated and mono-unsaturated fatty acids at nearly equal rates from either the sn-1 or sn-2 position in diacyl phosphatidylcholine. However, has a weak activity toward polyunsaturated fatty acids at the sn-2 position, and thereby favors the production of 2-arachidonoyl lysophosphatidylcholine, a key branch point metabolite in eicosanoid signaling. On the other hand, can produce arachidonic acid from the sn-1 position of diacyl phospholipid and from the sn-2 position of arachidonate-containing plasmalogen substrates. Therefore, plays an important role in the mobilization of arachidonic acid in response to cellular stimuli and the generation of lipid second messengers. Can also hydrolyze lysophosphatidylcholine. In the mitochondrial compartment, catalyzes the hydrolysis and release of oxidized aliphatic chains from cardiolipin and integrates mitochondrial bioenergetics and signaling. It is essential for maintaining efficient bioenergetic mitochondrial function through tailoring mitochondrial membrane lipid metabolism and composition. The sequence is that of Calcium-independent phospholipase A2-gamma from Homo sapiens (Human).